A 98-amino-acid chain; its full sequence is UPF0213 protein LACR_2011 (98 aa).

Positions 2–79 (NTHFTYVLQC…KLVRQQKLKL (78 aa)) constitute a GIY-YIG domain.

It belongs to the UPF0213 family.

This is UPF0213 protein LACR_2011 from Lactococcus lactis subsp. cremoris (strain SK11).